Consider the following 407-residue polypeptide: Tyrosine--tRNA ligase (407 aa).

Position 35 (Y35) interacts with L-tyrosine. Positions 40 to 49 (PTADSLHVGH) match the 'HIGH' region motif. Residues Y168 and Q172 each coordinate L-tyrosine. A 'KMSKS' region motif is present at residues 228–232 (KMGKT). K231 contacts ATP. The S4 RNA-binding domain maps to 341 to 405 (NPLVDLLAKC…RGKKNFNRIV (65 aa)).

Belongs to the class-I aminoacyl-tRNA synthetase family. TyrS type 1 subfamily. In terms of assembly, homodimer.

The protein resides in the cytoplasm. The catalysed reaction is tRNA(Tyr) + L-tyrosine + ATP = L-tyrosyl-tRNA(Tyr) + AMP + diphosphate + H(+). Its function is as follows. Catalyzes the attachment of tyrosine to tRNA(Tyr) in a two-step reaction: tyrosine is first activated by ATP to form Tyr-AMP and then transferred to the acceptor end of tRNA(Tyr). This is Tyrosine--tRNA ligase from Clostridium botulinum (strain 657 / Type Ba4).